A 272-amino-acid polypeptide reads, in one-letter code: Dermonecrotic toxin LvSicTox-alphaIC1bii (272 aa).

H5 is a catalytic residue. The Mg(2+) site is built by E25 and D27. Catalysis depends on H41, which acts as the Nucleophile. 2 disulfides stabilise this stretch: C45–C51 and C47–C189. Residue D84 participates in Mg(2+) binding.

This sequence belongs to the arthropod phospholipase D family. Class II subfamily. Mg(2+) serves as cofactor. In terms of tissue distribution, expressed by the venom gland.

The protein localises to the secreted. The enzyme catalyses an N-(acyl)-sphingosylphosphocholine = an N-(acyl)-sphingosyl-1,3-cyclic phosphate + choline. It carries out the reaction an N-(acyl)-sphingosylphosphoethanolamine = an N-(acyl)-sphingosyl-1,3-cyclic phosphate + ethanolamine. The catalysed reaction is a 1-acyl-sn-glycero-3-phosphocholine = a 1-acyl-sn-glycero-2,3-cyclic phosphate + choline. It catalyses the reaction a 1-acyl-sn-glycero-3-phosphoethanolamine = a 1-acyl-sn-glycero-2,3-cyclic phosphate + ethanolamine. In terms of biological role, dermonecrotic toxins cleave the phosphodiester linkage between the phosphate and headgroup of certain phospholipids (sphingolipid and lysolipid substrates), forming an alcohol (often choline) and a cyclic phosphate. This toxin acts on sphingomyelin (SM). It may also act on ceramide phosphoethanolamine (CPE), lysophosphatidylcholine (LPC) and lysophosphatidylethanolamine (LPE), but not on lysophosphatidylserine (LPS), and lysophosphatidylglycerol (LPG). It acts by transphosphatidylation, releasing exclusively cyclic phosphate products as second products. Induces dermonecrosis, hemolysis, increased vascular permeability, edema, inflammatory response, and platelet aggregation. The sequence is that of Dermonecrotic toxin LvSicTox-alphaIC1bii from Loxosceles variegata (Recluse spider).